The chain runs to 291 residues: Diaminopimelate epimerase (291 aa).

Residues Asn-13, Gln-46, and Asn-66 each contribute to the substrate site. Residue Cys-75 is the Proton donor of the active site. Residues 76–77 (GN), Asn-156, Asn-189, and 207–208 (ER) each bind substrate. The Proton acceptor role is filled by Cys-216. 217-218 (GS) lines the substrate pocket.

Belongs to the diaminopimelate epimerase family. As to quaternary structure, homodimer.

The protein localises to the cytoplasm. The enzyme catalyses (2S,6S)-2,6-diaminopimelate = meso-2,6-diaminopimelate. It participates in amino-acid biosynthesis; L-lysine biosynthesis via DAP pathway; DL-2,6-diaminopimelate from LL-2,6-diaminopimelate: step 1/1. Its function is as follows. Catalyzes the stereoinversion of LL-2,6-diaminopimelate (L,L-DAP) to meso-diaminopimelate (meso-DAP), a precursor of L-lysine and an essential component of the bacterial peptidoglycan. The chain is Diaminopimelate epimerase from Rhodospirillum centenum (strain ATCC 51521 / SW).